Here is a 150-residue protein sequence, read N- to C-terminus: Large ribosomal subunit protein bL9 (150 aa).

The protein belongs to the bacterial ribosomal protein bL9 family.

Its function is as follows. Binds to the 23S rRNA. This chain is Large ribosomal subunit protein bL9, found in Paraburkholderia phymatum (strain DSM 17167 / CIP 108236 / LMG 21445 / STM815) (Burkholderia phymatum).